Reading from the N-terminus, the 207-residue chain is Phosphoenolpyruvate guanylyltransferase (207 aa).

3 residues coordinate phosphoenolpyruvate: T137, G153, and S156.

Belongs to the CofC family.

The enzyme catalyses phosphoenolpyruvate + GTP + H(+) = enolpyruvoyl-2-diphospho-5'-guanosine + diphosphate. The protein operates within cofactor biosynthesis; coenzyme F420 biosynthesis. Its function is as follows. Guanylyltransferase that catalyzes the activation of phosphoenolpyruvate (PEP) as enolpyruvoyl-2-diphospho-5'-guanosine, via the condensation of PEP with GTP. It is involved in the biosynthesis of coenzyme F420, a hydride carrier cofactor. In Sphaerobacter thermophilus (strain ATCC 49802 / DSM 20745 / KCCM 41009 / NCIMB 13125 / S 6022), this protein is Phosphoenolpyruvate guanylyltransferase.